Reading from the N-terminus, the 389-residue chain is 5-hydroxytryptamine receptor 1B (389 aa).

The Extracellular segment spans residues 1-45; the sequence is MGNPEASCTPPAVLGSQTGLPHANVSAPPNNCSAPSHIYQDSIAL. Residues asparagine 24 and asparagine 31 are each glycosylated (N-linked (GlcNAc...) asparagine). Residues 46 to 71 form a helical membrane-spanning segment; it reads PWKVLLVVLLALITLATTLSNAFVIA. Over 72–85 the chain is Cytoplasmic; sequence TVYRTRKLHTPANY. Residues 86-110 form a helical membrane-spanning segment; that stretch reads LIASLAFTDLLVSILVMPISTMYTV. Residues 111 to 118 are Extracellular-facing; the sequence is TGRWTLGQ. The helical transmembrane segment at 119 to 144 threads the bilayer; that stretch reads ALCDFWLSSDITCCTASIMHLCVIAL. Cysteine 121 and cysteine 198 are joined by a disulfide. Ergotamine-binding residues include aspartate 128 and threonine 133. Residues 145 to 147 carry the DRY motif; important for ligand-induced conformation changes and signaling motif; the sequence is DRY. Topologically, residues 145-164 are cytoplasmic; sequence DRYWAITDAVGYSAKRTPRR. The helical transmembrane segment at 165 to 183 threads the bilayer; it reads AAGMIALVWVFSICISLPP. At 184-204 the chain is on the extracellular side; it reads FFWRQAKAEEEVLDCLVNTDH. Valine 200 is an ergotamine binding site. Residues 205–228 traverse the membrane as a helical segment; it reads VLYTVYSTGGAFYLPTLLLIALYG. Over 229-314 the chain is Cytoplasmic; the sequence is RIYVEARSRI…AARERKATKT (86 aa). Residues 315-336 form a helical membrane-spanning segment; the sequence is LGVILGAFIVCWLPFFIISLVM. Over 337-346 the chain is Extracellular; it reads PICKDACWFH. The chain crosses the membrane as a helical span at residues 347-369; it reads MAIFDFFTWLGYLNSLINPIIYT. The short motif at 364 to 368 is the NPxxY motif; important for ligand-induced conformation changes and signaling element; sequence NPIIY. The Cytoplasmic portion of the chain corresponds to 370–389; that stretch reads MSNEDFKQAFHKLIRFKCTT. A lipid anchor (S-palmitoyl cysteine) is attached at cysteine 387.

It belongs to the G-protein coupled receptor 1 family. Homodimer. Heterodimer with HTR1D. Post-translationally, phosphorylated. Desensitization of the receptor may be mediated by its phosphorylation. In terms of processing, palmitoylated.

It is found in the cell membrane. Functionally, G-protein coupled receptor for 5-hydroxytryptamine (serotonin). Also functions as a receptor for ergot alkaloid derivatives, various anxiolytic and antidepressant drugs and other psychoactive substances, such as lysergic acid diethylamide (LSD). Ligand binding causes a conformation change that triggers signaling via guanine nucleotide-binding proteins (G proteins) and modulates the activity of downstream effectors, such as adenylate cyclase. HTR1B is coupled to G(i)/G(o) G alpha proteins and mediates inhibitory neurotransmission by inhibiting adenylate cyclase activity. Arrestin family members inhibit signaling via G proteins and mediate activation of alternative signaling pathways. Regulates the release of 5-hydroxytryptamine, dopamine and acetylcholine in the brain, and thereby affects neural activity, nociceptive processing, pain perception, mood and behavior. Besides, plays a role in vasoconstriction of cerebral arteries. This Cavia porcellus (Guinea pig) protein is 5-hydroxytryptamine receptor 1B (HTR1B).